Here is a 334-residue protein sequence, read N- to C-terminus: Beta-glucanase (334 aa).

An N-terminal signal peptide occupies residues 1–27 (MKNRVISLLMASLLLVLSVIVAPFYKA). Positions 28-248 (EAATVVNTPF…YVKYYPNGVP (221 aa)) constitute a GH16 domain. The active-site Nucleophile is Glu136. The active-site Proton donor is Glu140. Residues 246-265 (GVPQDNPTPTPTIAPSTPTN) form a disordered region. Residues 267 to 334 (NLPLKGDVNG…RYLIRAIPSL (68 aa)) enclose the Dockerin domain.

This sequence belongs to the glycosyl hydrolase 16 family.

The enzyme catalyses Hydrolysis of (1-&gt;4)-beta-D-glucosidic linkages in beta-D-glucans containing (1-&gt;3)- and (1-&gt;4)-bonds.. The sequence is that of Beta-glucanase (licB) from Acetivibrio thermocellus (Hungateiclostridium thermocellum).